The primary structure comprises 511 residues: MATVREKAAALDLSALHSPAQRPPGFSVAQKPFGATYVWSSIINTLQTQVEVKKRRHHLKRHNDCFVGSEAVDVIYSHLTQNKFFGDVDIPRAKVVRVCQALMDYKVFEAVQTRVFGKDKKPAFEDSSCSLYRFTTIPNQDSQLGHENKGTSPSRFSDALFKSSDIKSDSLEDLWENLSLKPTNSPHVSTRLSPQVINEVWQEETIGRLLQLVDLPFLDSLLKQQEVVPKAPQSKRQPDMVNTSNYLDRGILRAYGDSQEDEWISAAIDCLEYLPDQMVVDISRNFPEQPDRTDLVKELLFGAIGKYYSTREPLLNHLSDVHNGIAELLVNGKTEIALEATQLFLKLLDSQNREEFRRLLYFMAVAADPSEFKLQEESDNRMVVKRVFSKAIVNNKNLSKGKTDLLVLFLMDHQKDVFKIPGTLHKIVSVKLLAIQKGRDPNKDTGYIYCQRIDGREYSSSIQKKTKDQLLSLLKTIDEDSKLSAKEKKKLLGQFHKSHPDIFIEYFGDSF.

The DEP domain occupies 46-136 (LQTQVEVKKR…SSCSLYRFTT (91 aa)).

The protein belongs to the DEPDC7 family.

The sequence is that of DEP domain-containing protein 7 (Depdc7) from Rattus norvegicus (Rat).